Consider the following 818-residue polypeptide: ATM interactor (818 aa).

The segment covering 1 to 34 (MAATEAAAADSAGPAPGVPATPASTRGAAAASSP) has biased composition (low complexity). Residues 1–62 (MAATEAAAAD…RAAAPVPPAR (62 aa)) form a disordered region. A C2H2-type 1 zinc finger spans residues 80-105 (ILCTVRGCGKILPNSPALNMHLVKSH). The C2H2-type 2; degenerate zinc-finger motif lies at 161-181 (HKCSKCSNSYGTEWDLKRHEE). The span at 210 to 221 (HEIPAEHRDPPS) shows a compositional bias: basic and acidic residues. Disordered stretches follow at residues 210–284 (HEIP…ATPP) and 603–625 (DNRS…GSAQ). The segment at 219-437 (PPSKKRKMES…PDSSVSSCSQ (219 aa)) is required for formation of RAD51 foci. 2 stretches are compositionally biased toward polar residues: residues 229–243 (YLQN…TEPL) and 603–612 (DNRSLLSDTN).

In terms of assembly, interacts via its C-terminus with ATM. Interacts with DYNLL; this interaction inhibits ATMIN transcriptional activity and hence may play a role in a feedback loop whereby DYNLL1 inhibits transactivation of its own promoter by ATMIN. ATMIN.

Its subcellular location is the nucleus. Transcription factor. Plays a crucial role in cell survival and RAD51 foci formation in response to methylating DNA damage. Involved in regulating the activity of ATM in the absence of DNA damage. May play a role in stabilizing ATM. Binds to the DYNLL1 promoter and activates its transcription. This chain is ATM interactor, found in Mus musculus (Mouse).